We begin with the raw amino-acid sequence, 276 residues long: uncharacterized protein (276 aa).

The AB hydrolase-1 domain occupies 20–137 (PVLIFIPGAN…PPINTFLPDS (118 aa)). The segment at 57 to 76 (GESELTEPLPDSASNPDSDY) is disordered.

It belongs to the AB hydrolase superfamily.

This is an uncharacterized protein from Staphylococcus aureus (strain COL).